The chain runs to 319 residues: Ferrochelatase (319 aa).

Residues His194 and Glu275 each coordinate Fe cation.

It belongs to the ferrochelatase family.

The protein resides in the cytoplasm. The catalysed reaction is heme b + 2 H(+) = protoporphyrin IX + Fe(2+). It functions in the pathway porphyrin-containing compound metabolism; protoheme biosynthesis; protoheme from protoporphyrin-IX: step 1/1. Functionally, catalyzes the ferrous insertion into protoporphyrin IX. This chain is Ferrochelatase, found in Vibrio vulnificus (strain YJ016).